The following is a 308-amino-acid chain: Sulfate adenylyltransferase subunit 2 (308 aa).

The segment at 286–308 (RQGRIIDHDGSASMEKKKQEGYF) is disordered.

The protein belongs to the PAPS reductase family. CysD subfamily. Heterodimer composed of CysD, the smaller subunit, and CysN.

The enzyme catalyses sulfate + ATP + H(+) = adenosine 5'-phosphosulfate + diphosphate. The protein operates within sulfur metabolism; hydrogen sulfide biosynthesis; sulfite from sulfate: step 1/3. Its function is as follows. With CysN forms the ATP sulfurylase (ATPS) that catalyzes the adenylation of sulfate producing adenosine 5'-phosphosulfate (APS) and diphosphate, the first enzymatic step in sulfur assimilation pathway. APS synthesis involves the formation of a high-energy phosphoric-sulfuric acid anhydride bond driven by GTP hydrolysis by CysN coupled to ATP hydrolysis by CysD. The polypeptide is Sulfate adenylyltransferase subunit 2 (Nocardia farcinica (strain IFM 10152)).